The chain runs to 699 residues: tRNA 5-methylaminomethyl-2-thiouridine biosynthesis bifunctional protein MnmC (699 aa).

The interval 1-247 (MPAVSRPLPP…KREMLCGEIA (247 aa)) is tRNA (mnm(5)s(2)U34)-methyltransferase. Residues 275–699 (IGAGLAGTSV…QPSPTTTETP (425 aa)) form an FAD-dependent cmnm(5)s(2)U34 oxidoreductase region. The tract at residues 675 to 699 (RGNATLSTSSPNDDAQPSPTTTETP) is disordered.

It in the N-terminal section; belongs to the methyltransferase superfamily. tRNA (mnm(5)s(2)U34)-methyltransferase family. In the C-terminal section; belongs to the DAO family. Requires FAD as cofactor.

Its subcellular location is the cytoplasm. The enzyme catalyses 5-aminomethyl-2-thiouridine(34) in tRNA + S-adenosyl-L-methionine = 5-methylaminomethyl-2-thiouridine(34) in tRNA + S-adenosyl-L-homocysteine + H(+). In terms of biological role, catalyzes the last two steps in the biosynthesis of 5-methylaminomethyl-2-thiouridine (mnm(5)s(2)U) at the wobble position (U34) in tRNA. Catalyzes the FAD-dependent demodification of cmnm(5)s(2)U34 to nm(5)s(2)U34, followed by the transfer of a methyl group from S-adenosyl-L-methionine to nm(5)s(2)U34, to form mnm(5)s(2)U34. The protein is tRNA 5-methylaminomethyl-2-thiouridine biosynthesis bifunctional protein MnmC of Chromohalobacter salexigens (strain ATCC BAA-138 / DSM 3043 / CIP 106854 / NCIMB 13768 / 1H11).